A 422-amino-acid polypeptide reads, in one-letter code: 3-phosphoshikimate 1-carboxyvinyltransferase (422 aa).

3-phosphoshikimate is bound by residues lysine 24, serine 25, and arginine 29. Lysine 24 serves as a coordination point for phosphoenolpyruvate. 2 residues coordinate phosphoenolpyruvate: glycine 93 and arginine 121. 3-phosphoshikimate-binding residues include serine 164, serine 165, glutamine 166, glutamate 308, and histidine 335. Glutamine 166 serves as a coordination point for phosphoenolpyruvate. The Proton acceptor role is filled by glutamate 308. The phosphoenolpyruvate site is built by arginine 339, arginine 380, and lysine 405.

Belongs to the EPSP synthase family. Monomer.

The protein localises to the cytoplasm. It catalyses the reaction 3-phosphoshikimate + phosphoenolpyruvate = 5-O-(1-carboxyvinyl)-3-phosphoshikimate + phosphate. Its pathway is metabolic intermediate biosynthesis; chorismate biosynthesis; chorismate from D-erythrose 4-phosphate and phosphoenolpyruvate: step 6/7. Its function is as follows. Catalyzes the transfer of the enolpyruvyl moiety of phosphoenolpyruvate (PEP) to the 5-hydroxyl of shikimate-3-phosphate (S3P) to produce enolpyruvyl shikimate-3-phosphate and inorganic phosphate. The polypeptide is 3-phosphoshikimate 1-carboxyvinyltransferase (Saccharopolyspora erythraea (strain ATCC 11635 / DSM 40517 / JCM 4748 / NBRC 13426 / NCIMB 8594 / NRRL 2338)).